Here is an 86-residue protein sequence, read N- to C-terminus: Putative defensin-like protein 211 (86 aa).

Positions 1–19 are cleaved as a signal peptide; the sequence is MNTIVLFLTLLILVSSCTS. 3 disulfide bridges follow: Cys-55-Cys-72, Cys-58-Cys-77, and Cys-62-Cys-79.

It belongs to the DEFL family.

Its subcellular location is the secreted. The protein is Putative defensin-like protein 211 of Arabidopsis thaliana (Mouse-ear cress).